Here is a 136-residue protein sequence, read N- to C-terminus: Large ribosomal subunit protein uL16 (136 aa).

It belongs to the universal ribosomal protein uL16 family. As to quaternary structure, part of the 50S ribosomal subunit.

Binds 23S rRNA and is also seen to make contacts with the A and possibly P site tRNAs. In Enterobacter sp. (strain 638), this protein is Large ribosomal subunit protein uL16.